A 133-amino-acid polypeptide reads, in one-letter code: IgW chain C region, secreted form 2 (133 aa).

The region spanning 1–71 (VISGFYPDSV…TGSRFNDRIS (71 aa)) is the Ig-like domain. N-linked (GlcNAc...) asparagine glycans are attached at residues Asn-32 and Asn-112. The segment at 76-133 (KGGTVNLPVPGGNTPCTCPPSSCSGCMPKLVYQTDLNVTLENGGQLQYNCHQQACKIK) is secretory tail.

As to expression, expressed mainly in lymphoid tissues including spleen, epigonal organ and circulating lymphocytes.

It is found in the secreted. In Heterodontus francisci (Horn shark), this protein is IgW chain C region, secreted form 2.